Consider the following 155-residue polypeptide: uncharacterized protein (155 aa).

This is an uncharacterized protein from Agrobacterium vitis (Rhizobium vitis).